The sequence spans 484 residues: Muscarinic acetylcholine receptor M4 (484 aa).

At 1–32 (MENDTWENESSASNHSIDETIVEIPGKYQTME) the chain is on the extracellular side. Residues Asn-3, Asn-8, and Asn-14 are each glycosylated (N-linked (GlcNAc...) asparagine). The chain crosses the membrane as a helical span at residues 33–55 (MIFIATVTGSLSLVTVVGNILVM). At 56-69 (LSIKVNRQLQTVNN) the chain is on the cytoplasmic side. A helical transmembrane segment spans residues 70-90 (YFLFSLACADLIIGVFSMNLY). At 91 to 107 (SLYIIKGYWPLGPIVCD) the chain is on the extracellular side. A disulfide bridge connects residues Cys-106 and Cys-186. The helical transmembrane segment at 108 to 129 (LWLALDYVVSNASVMNLLIISL) threads the bilayer. At 130–149 (ERXFCVTKPLTYPARRTTKM) the chain is on the cytoplasmic side. Residues 150–172 (AGLMIAAAWLLSFELWAPAILFW) traverse the membrane as a helical segment. Topologically, residues 173–194 (QFIVGQRTVPSGECYIQFLSNP) are extracellular. The helical transmembrane segment at 195–217 (AVTFGTAIAAFYLPVVIMTILYI) threads the bilayer. At 218-406 (HISLASRSRV…AAREKKVTRT (189 aa)) the chain is on the cytoplasmic side. Positions 255-316 (NIPKQDAGDK…EKQPLSEASS (62 aa)) are disordered. Residues 260–270 (DAGDKVVEKKN) are compositionally biased toward basic and acidic residues. A helical transmembrane segment spans residues 407–427 (IFAILLAFIITWTPYNVMVLI). The Extracellular segment spans residues 428-441 (NTFCQTCIPETIWY). Residues 442–461 (IGYWLCYVNSTINPACYALC) form a helical membrane-spanning segment. The Cytoplasmic portion of the chain corresponds to 462-484 (NATFKKTFKHLLMCQYKSIGTAR).

It belongs to the G-protein coupled receptor 1 family. Muscarinic acetylcholine receptor subfamily. CHRM4 sub-subfamily.

It is found in the cell membrane. It localises to the postsynaptic cell membrane. In terms of biological role, the muscarinic acetylcholine receptor mediates various cellular responses, including inhibition of adenylate cyclase, breakdown of phosphoinositides and modulation of potassium channels through the action of G proteins. Primary transducing effect is inhibition of adenylate cyclase. The chain is Muscarinic acetylcholine receptor M4 (chrm4) from Xenopus laevis (African clawed frog).